Consider the following 496-residue polypeptide: E3 ubiquitin-protein ligase CBL-C (496 aa).

The tract at residues 7–144 (PRGWQRGEPR…SALFPAGKYC (138 aa)) is 4H. One can recognise a Cbl-PTB domain in the interval 7–320 (PRGWQRGEPR…GKKHNPDLTE (314 aa)). The EF-hand-like stretch occupies residues 145-217 (GHLYQLTKGS…FEFDVFTRLF (73 aa)). Ca(2+) contacts are provided by Asp198, Thr200, Asn202, and Glu209. The segment at 218–320 (QPWPTLLRNW…GKKHNPDLTE (103 aa)) is SH2-like. Residue Arg263 participates in 4-O-phospho-L-tyrosine binding. The linker stretch occupies residues 321-349 (LCRVEPYQRIQVSEEQLLLYQAMNSTFQL). Phosphotyrosine; by SRC is present on Tyr340. The segment at 350–389 (CKICAERDKDVRIEPCGHLLCSCCLAAWQDSDSQTCPFCR) adopts an RING-type zinc-finger fold. The interval 350–494 (CKICAERDKD…RPRAREEATE (145 aa)) is interaction with RET. The tract at residues 432–453 (PVIPSAPSLLPEDQFPQGPQDK) is disordered.

As to quaternary structure, interacts with Ubiquitin-conjugating enzyme E2 UBE2D2 and UBE2D3. Isoform 1 interacts with EGFR (tyrosine phosphorylated). Interacts with the SH3 domain proteins LYN and CRK. Interacts (via RING-type zinc finger) with TGFB1I1 (via LIM zinc-binding domain 2); the interaction is direct and enhances the E3 activity. Interacts directly with RET (inactive) and CD2AP; dissociates from RET upon RET activation by GDNF which also increases the interaction with CD2AP suggesting dissociation as CBLC:CD2AP complex. Interacts with SRC; the interaction is enhanced when SRC is phosphorylated at 'Tyr-419'. In terms of processing, phosphorylated on tyrosines by EGFR. Post-translationally, phosphorylated on multiple tyrosine residues by SRC. Isoform 1, but not isoform 2, is phosphorylated on tyrosines by EGFR. Autoubiquitinated, when phosphorylated at Tyr-340. Widely expressed in tissues, where the expression is restricted to epithelial cells (at protein level).

The catalysed reaction is S-ubiquitinyl-[E2 ubiquitin-conjugating enzyme]-L-cysteine + [acceptor protein]-L-lysine = [E2 ubiquitin-conjugating enzyme]-L-cysteine + N(6)-ubiquitinyl-[acceptor protein]-L-lysine.. Its activity is regulated as follows. Phosphorylation at Tyr-340 is necessary and sufficient for the activation of E3 activity. In terms of biological role, acts as an E3 ubiquitin-protein ligase, which accepts ubiquitin from specific E2 ubiquitin-conjugating enzymes, and then transfers it to substrates promoting their degradation by the proteasome. Functionally coupled with the E2 ubiquitin-protein ligases UB2D1, UB2D2 and UB2D3. Regulator of EGFR mediated signal transduction; upon EGF activation, ubiquitinates EGFR. Isoform 1, but not isoform 2, inhibits EGF stimulated MAPK1 activation. Promotes ubiquitination of SRC phosphorylated at 'Tyr-424', has the highest ubiquitin ligase activity among CBL family proteins. In collaboration with CD2AP may act as regulatory checkpoint for Ret signaling by modulating the rate of RET degradation after ligand activation; CD2AP converts it from an inhibitor to a promoter of RET degradation; the function limits the potency of GDNF on neuronal survival. This chain is E3 ubiquitin-protein ligase CBL-C (Cblc), found in Mus musculus (Mouse).